We begin with the raw amino-acid sequence, 365 residues long: Histidinol-phosphate aminotransferase (365 aa).

Lys-223 carries the N6-(pyridoxal phosphate)lysine modification.

This sequence belongs to the class-II pyridoxal-phosphate-dependent aminotransferase family. Histidinol-phosphate aminotransferase subfamily. Homodimer. Pyridoxal 5'-phosphate serves as cofactor.

It carries out the reaction L-histidinol phosphate + 2-oxoglutarate = 3-(imidazol-4-yl)-2-oxopropyl phosphate + L-glutamate. The protein operates within amino-acid biosynthesis; L-histidine biosynthesis; L-histidine from 5-phospho-alpha-D-ribose 1-diphosphate: step 7/9. The protein is Histidinol-phosphate aminotransferase of Brucella melitensis biotype 1 (strain ATCC 23456 / CCUG 17765 / NCTC 10094 / 16M).